Here is a 330-residue protein sequence, read N- to C-terminus: Src kinase-associated phosphoprotein 2-A (330 aa).

A disordered region spans residues 53 to 77 (QDFQDKAETDDQEENDGFSLPPDAV). The 104-residue stretch at 105–208 (DYLRAGYLEK…WINVIMNARG (104 aa)) folds into the PH domain. The interval 228-261 (SHEEDIYEELPEESEKPVTGSETPKATPVPVNNT) is disordered. Residues 247-261 (GSETPKATPVPVNNT) are compositionally biased toward polar residues. The SH3 domain occupies 268-329 (DYANFYRGLW…PKAYIIEMYD (62 aa)).

This sequence belongs to the SKAP family. Post-translationally, phosphorylated on tyrosines.

It localises to the cytoplasm. Its function is as follows. May be involved in B-cell and macrophage adhesion processes. May play a role in src signaling pathway. This Xenopus laevis (African clawed frog) protein is Src kinase-associated phosphoprotein 2-A (skap2-a).